Consider the following 537-residue polypeptide: Multidrug resistance protein Stp (537 aa).

Transmembrane regions (helical) follow at residues 6–26 (LLTL…ALIV), 46–66 (WVVA…ATLA), 77–97 (IGVS…SIAV), 104–124 (AQGL…SAAF), 136–156 (IWTA…GLLV), 163–183 (SIFY…LCYV), 200–220 (LLFI…PQIG), 223–243 (SVQT…FVWL), 262–282 (YALA…MLLL), 300–320 (LMIL…GHLV), 327–347 (VPIL…IFSE), 352–372 (ALVL…LTPI), 397–417 (AIGS…WLSA), and 478–498 (VALL…WRWF).

It belongs to the major facilitator superfamily. EmrB family.

It localises to the cell membrane. In Mycobacterium tuberculosis (strain CDC 1551 / Oshkosh), this protein is Multidrug resistance protein Stp (stp).